Reading from the N-terminus, the 347-residue chain is UDP-N-acetylglucosamine--N-acetylmuramyl-(pentapeptide) pyrophosphoryl-undecaprenol N-acetylglucosamine transferase (347 aa).

UDP-N-acetyl-alpha-D-glucosamine-binding positions include 11-13, N122, R163, S189, and Q279; that span reads TGG.

Belongs to the glycosyltransferase 28 family. MurG subfamily.

Its subcellular location is the cell inner membrane. It carries out the reaction di-trans,octa-cis-undecaprenyl diphospho-N-acetyl-alpha-D-muramoyl-L-alanyl-D-glutamyl-meso-2,6-diaminopimeloyl-D-alanyl-D-alanine + UDP-N-acetyl-alpha-D-glucosamine = di-trans,octa-cis-undecaprenyl diphospho-[N-acetyl-alpha-D-glucosaminyl-(1-&gt;4)]-N-acetyl-alpha-D-muramoyl-L-alanyl-D-glutamyl-meso-2,6-diaminopimeloyl-D-alanyl-D-alanine + UDP + H(+). It functions in the pathway cell wall biogenesis; peptidoglycan biosynthesis. In terms of biological role, cell wall formation. Catalyzes the transfer of a GlcNAc subunit on undecaprenyl-pyrophosphoryl-MurNAc-pentapeptide (lipid intermediate I) to form undecaprenyl-pyrophosphoryl-MurNAc-(pentapeptide)GlcNAc (lipid intermediate II). This chain is UDP-N-acetylglucosamine--N-acetylmuramyl-(pentapeptide) pyrophosphoryl-undecaprenol N-acetylglucosamine transferase, found in Sulfurihydrogenibium sp. (strain YO3AOP1).